A 675-amino-acid polypeptide reads, in one-letter code: Protein PALS1 (675 aa).

Disordered regions lie at residues 1–32 and 52–79; these read MTTS…HPKH and RSAQ…KQEL. The required for the correct localization of PALS1 and PATJ at cell-cell contacts and the normal formation of tight junctions and adherens junctions stretch occupies residues 1–345; sequence MTTSYMNGHV…QQIKPPPAKE (345 aa). Phosphoserine occurs at positions 14 and 25. Residues 21–140 form an interaction with PARD6B region; it reads LGLASPEEHP…LKHIQHTLVD (120 aa). Basic and acidic residues predominate over residues 54–79; sequence AQLERIRQQQEDMRRRREEEGKKQEL. Phosphoserine is present on residues serine 83 and serine 84. L27 domains follow at residues 120-177 and 179-235; these read KILE…NKAS and PFPL…MQLE. Residues 181–243 form an interaction with LIN7C region; the sequence is PLIANVQDLV…LEPITDERVY (63 aa). The 81-residue stretch at 256 to 336 folds into the PDZ domain; that stretch reads IVRIEKARDI…TLTFVLIPSQ (81 aa). Positions 345–417 constitute an SH3 domain; the sequence is ETVIHVKAHF…PGKSFQQQRE (73 aa). The region spanning 479–660 is the Guanylate kinase-like domain; sequence KRPIILIGPQ…AYQELLRLIN (182 aa). Residue 486–493 participates in ATP binding; sequence GPQNCGQN.

It belongs to the MAGUK family. As to quaternary structure, heterodimer with MPP1. Forms a heterotrimeric complex composed of PALS1, LIN7B and PATJ; the N-terminal L27 domain of PALS1 interacts with the L27 domain of PATJ and the C-terminal L27 domain of PALS1 interacts with the L27 domain of LIN7B. Component of a complex composed of PALS1, CRB1 and MPP4. Component of a complex whose core is composed of ARHGAP17, AMOT, PALS1, PATJ and PARD3/PAR3. Component of a complex composed of PALS1, CRB1 and EPB41L5. Within the complex, interacts (via HOOK domain) with EPB41L5 (via FERM domain), and interacts with CRB1 (via intracellular domain). Component of a complex composed of PALS1, MPP3 and CRB1; PALS1 acts as a bridging protein between MPP3 (via guanylate kinase-like domain) and CRB1. Component of a complex composed of CRB3, PALS1 and PATJ. As part of the Crumbs complex; interacts with WWP1, the interaction is enhanced by AMOTL2 and facilitates WWP1 localization to the plasma membrane. The Crumbs complex promotes monoubiquitination of AMOTL2 by WWP1, which activates the Hippo signaling pathway. Interacts (via PDZ domain) with PATJ (via N-terminus). Interacts with EZR. Interacts (via PDZ domain) with CRB1 (via C-terminal ERLI motif). While the PDZ domain is sufficient for interaction with CRB1, the adjacent SH3 and guanylate kinase-like domains are likely to contribute to a high affinity interaction. Interacts with WWTR1/TAZ (via WW domain). Interacts with MPP7. Interacts (via PDZ domain) with CRB3 (via C-terminus). Interacts with LIN7C. Interacts with MPDZ. Interacts with PARD6B. Interacts with SC6A1. Interacts with CDH5; the interaction promotes PALS1 localization to cell junctions and is required for CDH5-mediated vascular lumen formation and endothelial cell. Interacts with NPHP1 (via coiled coil and SH3 domains). Interacts with NPHP4. Interacts with CRB2.

It is found in the golgi apparatus. The protein localises to the cell membrane. It localises to the endomembrane system. Its subcellular location is the cell junction. The protein resides in the tight junction. It is found in the adherens junction. The protein localises to the cell projection. It localises to the axon. Its subcellular location is the perikaryon. The protein resides in the apical cell membrane. Its function is as follows. Plays a role in tight junction biogenesis and in the establishment of cell polarity in epithelial cells. Also involved in adherens junction biogenesis by ensuring correct localization of the exocyst complex protein EXOC4/SEC8 which allows trafficking of adherens junction structural component CDH1 to the cell surface. Plays a role through its interaction with CDH5 in vascular lumen formation and endothelial membrane polarity. Required during embryonic and postnatal retinal development. Required for the maintenance of cerebellar progenitor cells in an undifferentiated proliferative state, preventing premature differentiation, and is required for cerebellar histogenesis, fissure formation, cerebellar layer organization and cortical development. Plays a role in neuronal progenitor cell survival, potentially via promotion of mTOR signaling. Plays a role in the radial and longitudinal extension of the myelin sheath in Schwann cells. May modulate SC6A1/GAT1-mediated GABA uptake by stabilizing the transporter. May play a role in the T-cell receptor-mediated activation of NF-kappa-B. Required for localization of EZR to the apical membrane of parietal cells and may play a role in the dynamic remodeling of the apical cytoskeleton. Required for the normal polarized localization of the vesicular marker STX4. Required for the correct trafficking of the myelin proteins PMP22 and MAG. Involved in promoting phosphorylation and cytoplasmic retention of transcriptional coactivators YAP1 and WWTR1/TAZ which leads to suppression of TGFB1-dependent transcription of target genes such as CCN2/CTGF, SERPINE1/PAI1, SNAI1/SNAIL1 and SMAD7. The protein is Protein PALS1 of Rattus norvegicus (Rat).